Consider the following 105-residue polypeptide: Putative regulatory protein COPRO5265_1186 (105 aa).

The tract at residues 76–105 (RLEEEEEEEERTEPITEQEAELEEESGEDV) is disordered. Residues 78–105 (EEEEEEEERTEPITEQEAELEEESGEDV) show a composition bias toward acidic residues.

The protein belongs to the RemA family.

The sequence is that of Putative regulatory protein COPRO5265_1186 from Coprothermobacter proteolyticus (strain ATCC 35245 / DSM 5265 / OCM 4 / BT).